The primary structure comprises 189 residues: UPF0312 protein VC0395_0473/VC395_A0785 (189 aa).

The N-terminal stretch at 1–22 (MKKTLMAVGLAAVISIPFAANA) is a signal peptide.

It belongs to the UPF0312 family. Type 1 subfamily.

The protein resides in the periplasm. This is UPF0312 protein VC0395_0473/VC395_A0785 from Vibrio cholerae serotype O1 (strain ATCC 39541 / Classical Ogawa 395 / O395).